The primary structure comprises 338 residues: Lipoate-protein ligase A (338 aa).

The BPL/LPL catalytic domain occupies P29–V216. Residues R71, G76–F79, and K134 each bind ATP. (R)-lipoate is bound at residue K134.

It belongs to the LplA family. Monomer.

It is found in the cytoplasm. It carries out the reaction L-lysyl-[lipoyl-carrier protein] + (R)-lipoate + ATP = N(6)-[(R)-lipoyl]-L-lysyl-[lipoyl-carrier protein] + AMP + diphosphate + H(+). The protein operates within protein modification; protein lipoylation via exogenous pathway; protein N(6)-(lipoyl)lysine from lipoate: step 1/2. It functions in the pathway protein modification; protein lipoylation via exogenous pathway; protein N(6)-(lipoyl)lysine from lipoate: step 2/2. In terms of biological role, catalyzes both the ATP-dependent activation of exogenously supplied lipoate to lipoyl-AMP and the transfer of the activated lipoyl onto the lipoyl domains of lipoate-dependent enzymes. The chain is Lipoate-protein ligase A from Escherichia coli O1:K1 / APEC.